We begin with the raw amino-acid sequence, 170 residues long: Acireductone dioxygenase (170 aa).

Fe(2+)-binding residues include His-99, His-101, Glu-105, and His-144. 4 residues coordinate Ni(2+): His-99, His-101, Glu-105, and His-144.

The protein belongs to the acireductone dioxygenase (ARD) family. In terms of assembly, monomer. The cofactor is Fe(2+). Ni(2+) serves as cofactor.

The catalysed reaction is 1,2-dihydroxy-5-(methylsulfanyl)pent-1-en-3-one + O2 = 3-(methylsulfanyl)propanoate + CO + formate + 2 H(+). It carries out the reaction 1,2-dihydroxy-5-(methylsulfanyl)pent-1-en-3-one + O2 = 4-methylsulfanyl-2-oxobutanoate + formate + 2 H(+). It functions in the pathway amino-acid biosynthesis; L-methionine biosynthesis via salvage pathway; L-methionine from S-methyl-5-thio-alpha-D-ribose 1-phosphate: step 5/6. In terms of biological role, catalyzes 2 different reactions between oxygen and the acireductone 1,2-dihydroxy-3-keto-5-methylthiopentene (DHK-MTPene) depending upon the metal bound in the active site. Fe-containing acireductone dioxygenase (Fe-ARD) produces formate and 2-keto-4-methylthiobutyrate (KMTB), the alpha-ketoacid precursor of methionine in the methionine recycle pathway. Ni-containing acireductone dioxygenase (Ni-ARD) produces methylthiopropionate, carbon monoxide and formate, and does not lie on the methionine recycle pathway. The protein is Acireductone dioxygenase of Bacillus cereus (strain ZK / E33L).